Consider the following 373-residue polypeptide: Glutamate 5-kinase (373 aa).

Residue Lys-15 participates in ATP binding. Ser-55, Asp-142, and Asn-154 together coordinate substrate. 174-175 (TD) serves as a coordination point for ATP. The 79-residue stretch at 281 to 359 (RGSVVLDDGA…SQIEAVLGYV (79 aa)) folds into the PUA domain.

This sequence belongs to the glutamate 5-kinase family.

The protein resides in the cytoplasm. It catalyses the reaction L-glutamate + ATP = L-glutamyl 5-phosphate + ADP. It participates in amino-acid biosynthesis; L-proline biosynthesis; L-glutamate 5-semialdehyde from L-glutamate: step 1/2. Catalyzes the transfer of a phosphate group to glutamate to form L-glutamate 5-phosphate. The chain is Glutamate 5-kinase from Nitrosomonas eutropha (strain DSM 101675 / C91 / Nm57).